A 737-amino-acid chain; its full sequence is Procollagen-lysine,2-oxoglutarate 5-dioxygenase 2 (737 aa).

The N-terminal stretch at 1–25 (MGDRGARPGRLMPMLALLSWAAGLG) is a signal peptide. N-linked (GlcNAc...) asparagine glycans are attached at residues N63 and N209. Phosphothreonine is present on T320. At Y323 the chain carries Phosphotyrosine. Residues N365 and N522 are each glycosylated (N-linked (GlcNAc...) asparagine). The Fe2OG dioxygenase domain maps to 644-737 (KGFALLNFVV…RYIAVSFIDP (94 aa)). Residues H666 and D668 each coordinate Fe cation. N696 carries an N-linked (GlcNAc...) asparagine glycan. K704 carries the N6-succinyllysine modification. H718 provides a ligand contact to Fe cation. N725 carries an N-linked (GlcNAc...) asparagine glycan. R728 is a catalytic residue.

As to quaternary structure, homodimer. Requires Fe(2+) as cofactor. L-ascorbate serves as cofactor. As to expression, is highly expressed in the heart, lung, kidney, eye, ovary and placenta.

The protein localises to the rough endoplasmic reticulum membrane. It carries out the reaction L-lysyl-[collagen] + 2-oxoglutarate + O2 = (5R)-5-hydroxy-L-lysyl-[collagen] + succinate + CO2. Forms hydroxylysine residues in -Xaa-Lys-Gly- sequences in collagens. These hydroxylysines serve as sites of attachment for carbohydrate units and are essential for the stability of the intermolecular collagen cross-links. This chain is Procollagen-lysine,2-oxoglutarate 5-dioxygenase 2 (Plod2), found in Mus musculus (Mouse).